The following is a 121-amino-acid chain: Ig heavy chain V region MPC 11 (121 aa).

The region spanning 1–112 is the Ig-like domain; it reads EAQLQQSGAE…NSSPYFDSWG (112 aa).

The chain is Ig heavy chain V region MPC 11 from Mus musculus (Mouse).